Reading from the N-terminus, the 717-residue chain is MFETHKVEIEWAGRPLKLETGKIARQADGAVLATYGETVVLATVVSAKAPKPGQDFFPLTVNYQEKTYAAGKIPGGYFKREGRPSENETLVSRLIDRPIRPLFPDGYKNDTQVIVTVMQHDLENNPDVVSMVAASAALTLSGIPFMGPIGGARVGYINGEYVLNPHLDEMDESSLDLVVAGTQEAVLMVESEAKELPEDVMLGAVVFGQQGFQPVIDAIIKLAEVAAKEPREFDPEDHSALENAMLAIAEDELRNAYKITEKAARYAAVDAVKAKVKEHFLPEGIENPAHTAEEIGSVFKHLQAKIVRWNILDTKSRIDGRDLETVRPIVSEVGLLPRTHGSALFTRGETQAIVVATLGTGEDEQYVDSLTGMYKERFMLHYNFPPFSVGETGRMGSPGRREIGHGKLAWRAIRPMLPEAEQFPYTLRVVSEITESNGSSSMATVCGTSLALMDAGVPLAKPVAGIAMGLIKEDERFAVLSDILGDEDHLGDMDFKVAGTEAGITSLQMDIKIEGITEEIMGIALNQAKGGRLHILGEMAKAISESRGQLGEFAPRIEVMNIPVDKIREVIGSGGKVIREIVEKTGAKINIEDDGTVKIASSSGKEIEAARKWIHSIVAEPEVGQIYEGTVVKTADFGAFVNFFGARDGLVHISQLASERVAKTTDVVKEGDKVWVKLMGFDERGKVRLSMKVVDQATGKEVVAEKGEKKDGGEAAE.

Residues aspartate 488 and aspartate 494 each coordinate Mg(2+). The 60-residue stretch at 555–614 (PRIEVMNIPVDKIREVIGSGGKVIREIVEKTGAKINIEDDGTVKIASSSGKEIEAARKWI) folds into the KH domain. In terms of domain architecture, S1 motif spans 624–692 (GQIYEGTVVK…ERGKVRLSMK (69 aa)).

The protein belongs to the polyribonucleotide nucleotidyltransferase family. Mg(2+) serves as cofactor.

Its subcellular location is the cytoplasm. The enzyme catalyses RNA(n+1) + phosphate = RNA(n) + a ribonucleoside 5'-diphosphate. In terms of biological role, involved in mRNA degradation. Catalyzes the phosphorolysis of single-stranded polyribonucleotides processively in the 3'- to 5'-direction. This Sinorhizobium fredii (strain NBRC 101917 / NGR234) protein is Polyribonucleotide nucleotidyltransferase.